Reading from the N-terminus, the 201-residue chain is Recombination protein RecR (201 aa).

The segment at 57–72 (CADCRTFTEQDVCNIC) adopts a C4-type zinc-finger fold. Residues 81 to 176 (GQICVVESPA…EASRIAHGVP (96 aa)) enclose the Toprim domain.

It belongs to the RecR family.

In terms of biological role, may play a role in DNA repair. It seems to be involved in an RecBC-independent recombinational process of DNA repair. It may act with RecF and RecO. This is Recombination protein RecR from Salmonella choleraesuis (strain SC-B67).